The following is a 65-amino-acid chain: Large ribosomal subunit protein bL35 (65 aa).

This sequence belongs to the bacterial ribosomal protein bL35 family.

The polypeptide is Large ribosomal subunit protein bL35 (Rhodospirillum rubrum (strain ATCC 11170 / ATH 1.1.1 / DSM 467 / LMG 4362 / NCIMB 8255 / S1)).